Here is a 149-residue protein sequence, read N- to C-terminus: Nucleoside diphosphate kinase (149 aa).

6 residues coordinate ATP: K9, F57, R85, T91, R102, and N112. The active-site Pros-phosphohistidine intermediate is the H115.

The protein belongs to the NDK family. Homotetramer. Requires Mg(2+) as cofactor.

It is found in the cytoplasm. The enzyme catalyses a 2'-deoxyribonucleoside 5'-diphosphate + ATP = a 2'-deoxyribonucleoside 5'-triphosphate + ADP. It catalyses the reaction a ribonucleoside 5'-diphosphate + ATP = a ribonucleoside 5'-triphosphate + ADP. Major role in the synthesis of nucleoside triphosphates other than ATP. The ATP gamma phosphate is transferred to the NDP beta phosphate via a ping-pong mechanism, using a phosphorylated active-site intermediate. The protein is Nucleoside diphosphate kinase of Staphylococcus haemolyticus (strain JCSC1435).